The primary structure comprises 209 residues: Large ribosomal subunit protein uL3 (209 aa).

Residue Q150 is modified to N5-methylglutamine.

Belongs to the universal ribosomal protein uL3 family. Part of the 50S ribosomal subunit. Forms a cluster with proteins L14 and L19. In terms of processing, methylated by PrmB.

Its function is as follows. One of the primary rRNA binding proteins, it binds directly near the 3'-end of the 23S rRNA, where it nucleates assembly of the 50S subunit. The polypeptide is Large ribosomal subunit protein uL3 (Buchnera aphidicola subsp. Acyrthosiphon pisum (strain 5A)).